The primary structure comprises 210 residues: MEVLKTGTTTVGITAGDYVIMGTDSRATMENFISNKNAQKLYQIDNYAAMTIAGLVGDAQVLVRYMKAEMELYRVQRKVSMPIDAAATLLSNMLNQTKFYPYMVQLLVGGYDTKPHIFSIDAAGGSVEDIYASTGSGSPFVYGVLEAEYQKNMSLDDGINLVIKAISAAKQRDSASGNMLQLGVVDPKKGFYYLSEDEILSRLKKLKLQL.

A propeptide spans 1 to 7 (MEVLKTG) (removed in mature form; by autocatalysis). The active-site Nucleophile is the T8.

The protein belongs to the peptidase T1B family. The 20S proteasome core is composed of 14 alpha and 14 beta subunits that assemble into four stacked heptameric rings, resulting in a barrel-shaped structure. The two inner rings, each composed of seven catalytic beta subunits, are sandwiched by two outer rings, each composed of seven alpha subunits. The catalytic chamber with the active sites is on the inside of the barrel. Has a gated structure, the ends of the cylinder being occluded by the N-termini of the alpha-subunits. Is capped at one or both ends by the proteasome regulatory ATPase, PAN.

It is found in the cytoplasm. The enzyme catalyses Cleavage of peptide bonds with very broad specificity.. The formation of the proteasomal ATPase PAN-20S proteasome complex, via the docking of the C-termini of PAN into the intersubunit pockets in the alpha-rings, triggers opening of the gate for substrate entry. Interconversion between the open-gate and close-gate conformations leads to a dynamic regulation of the 20S proteasome proteolysis activity. In terms of biological role, component of the proteasome core, a large protease complex with broad specificity involved in protein degradation. The sequence is that of Proteasome subunit beta from Picrophilus torridus (strain ATCC 700027 / DSM 9790 / JCM 10055 / NBRC 100828 / KAW 2/3).